A 426-amino-acid chain; its full sequence is D-ribulose kinase (426 aa).

Residues D8, 12 to 15 (SGAR), S72, and D221 each bind substrate. ATP is bound by residues S243, G281, and 376–380 (GGAKN).

This sequence belongs to the FGGY kinase family. It depends on a divalent metal cation as a cofactor.

The enzyme catalyses D-ribulose + ATP = D-ribulose 5-phosphate + ADP + H(+). Its function is as follows. Exhibits ATP hydrolysis without substrate. Phosphorylates D-ribulose. The chain is D-ribulose kinase from Synechococcus elongatus (strain ATCC 33912 / PCC 7942 / FACHB-805) (Anacystis nidulans R2).